Here is a 404-residue protein sequence, read N- to C-terminus: Advanced glycosylation end product-specific receptor (404 aa).

Positions 1 to 22 (MAAGTAVGAWVLVLSLWGAVVG) are cleaved as a signal peptide. Residues 23–116 (AQNITARIGE…KETKSNYRVR (94 aa)) enclose the Ig-like V-type domain. Residues 23 to 342 (AQNITARIGE…VGGSGLGTLA (320 aa)) are Extracellular-facing. Asn25 and Asn81 each carry an N-linked (GlcNAc...) asparagine glycan. 2 disulfide bridges follow: Cys38-Cys99 and Cys144-Cys208. 2 Ig-like C2-type domains span residues 124-221 (PEIV…RALR) and 227-317 (PRVW…RAVS). A helical membrane pass occupies residues 343–363 (LALGILGGLGTAALLIGVILW). At 364 to 404 (QRRQRRGEERKAPENQEEEEERAELNQSEEPEAGESSTGGP) the chain is on the cytoplasmic side. The interval 367–404 (QRRGEERKAPENQEEEEERAELNQSEEPEAGESSTGGP) is disordered. Acidic residues predominate over residues 378 to 396 (NQEEEEERAELNQSEEPEA). Ser391 bears the Phosphoserine; by PKC/PRKCZ and ATM mark.

In terms of assembly, constitutive homodimer; disulfide-linked. Forms homooligomers. Interacts with S100A1 and APP. Interacts with S100B, S100A12 and S100A14. Interacts with TIRAP. Interacts with HMGB1. Interacts with LGP2; this interaction plays an important role in AGER-mediated pro-inflammatory responses and cytokine release. Interacts with double-strand break repair protein MRE11 which is a core component of the MRN complex. The interaction enhances MRE11 endonuclease activity and promotes DNA repair. Interacts with the MCM2-7 complex via interaction with complex member MCM2; the interaction is increased following DNA replication stress and stabilizes the MCM2-7 complex at replication forks. Interacts with longistatin, a protein from the saliva of the tick, Haemaphysalis longicornis; the interaction attenuates AGER-mediated production of reactive oxygen species (ROS), activation of NF-kappa-B and expression of adhesion molecules and cytokines in human endothelial cells. Phosphorylated on its cytoplasmic domain by PKCzeta/PRKCZ upon ligand binding. Phosphorylated by ATM following DNA damage. Post-translationally, targeted by the ubiquitin E3 ligase subunit FBXO10 to mediate its ubiquitination and degradation. In terms of tissue distribution, endothelial cells. Increased expression in pre-term labor and preeclampsia placentas compared to controls.

It is found in the cell membrane. Its subcellular location is the cell projection. The protein resides in the phagocytic cup. It localises to the early endosome. The protein localises to the nucleus. It is found in the secreted. Functionally, cell surface pattern recognition receptor that senses endogenous stress signals with a broad ligand repertoire including advanced glycation end products, S100 proteins, high-mobility group box 1 protein/HMGB1, amyloid beta/APP oligomers, nucleic acids, histones, phospholipids and glycosaminoglycans. Advanced glycosylation end products are nonenzymatically glycosylated proteins which accumulate in vascular tissue in aging and at an accelerated rate in diabetes. These ligands accumulate at inflammatory sites during the pathogenesis of various diseases including diabetes, vascular complications, neurodegenerative disorders and cancers, and RAGE transduces their binding into pro-inflammatory responses. Upon ligand binding, uses TIRAP and MYD88 as adapters to transduce the signal ultimately leading to the induction of inflammatory cytokines IL6, IL8 and TNFalpha through activation of NF-kappa-B. Interaction with S100A12 on endothelium, mononuclear phagocytes, and lymphocytes triggers cellular activation, with generation of key pro-inflammatory mediators. Interaction with S100B after myocardial infarction may play a role in myocyte apoptosis by activating ERK1/2 and p53/TP53 signaling. Contributes to the translocation of amyloid-beta peptide (ABPP) across the cell membrane from the extracellular to the intracellular space in cortical neurons. ABPP-initiated RAGE signaling, especially stimulation of p38 mitogen-activated protein kinase (MAPK), has the capacity to drive a transport system delivering ABPP as a complex with RAGE to the intraneuronal space. Participates in endothelial albumin transcytosis together with HMGB1 through the RAGE/SRC/Caveolin-1 pathway, leading to endothelial hyperpermeability. Mediates the loading of HMGB1 in extracellular vesicles (EVs) that shuttle HMGB1 to hepatocytes by transferrin-mediated endocytosis and subsequently promote hepatocyte pyroptosis by activating the NLRP3 inflammasome. Binds to DNA and promotes extracellular hypomethylated DNA (CpG DNA) uptake by cells via the endosomal route to activate inflammatory responses. Mediates phagocytosis by non-professional phagocytes (NPP) and this is enhanced by binding to ligands including RNA, DNA, HMGB1 and histones. Promotes NPP-mediated phagocytosis of Saccharomyces cerevisiae spores by binding to RNA attached to the spore wall. Also promotes NPP-mediated phagocytosis of apoptotic cells. Following DNA damage, recruited to DNA double-strand break sites where it colocalizes with the MRN repair complex via interaction with double-strand break repair protein MRE11. Enhances the endonuclease activity of MRE11, promoting the end resection of damaged DNA. Promotes DNA damage repair in trophoblasts which enhances trophoblast invasion and contributes to placental development and maintenance. Protects cells from DNA replication stress by localizing to damaged replication forks where it stabilizes the MCM2-7 complex and promotes faithful progression of the replication fork. Mediates the production of reactive oxygen species (ROS) in human endothelial cells. The chain is Advanced glycosylation end product-specific receptor (AGER) from Homo sapiens (Human).